The sequence spans 492 residues: UDP-N-acetylmuramoyl-L-alanyl-D-glutamate--2,6-diaminopimelate ligase (492 aa).

A UDP-N-acetyl-alpha-D-muramoyl-L-alanyl-D-glutamate-binding site is contributed by Ser30. 114-120 (GTNGKTS) contacts ATP. UDP-N-acetyl-alpha-D-muramoyl-L-alanyl-D-glutamate contacts are provided by residues 156–157 (TT), Ser183, Gln189, and Arg191. An N6-carboxylysine modification is found at Lys223. Residues Arg389, 413 to 416 (DNPR), Gly462, and Glu466 each bind meso-2,6-diaminopimelate. The Meso-diaminopimelate recognition motif signature appears at 413–416 (DNPR).

This sequence belongs to the MurCDEF family. MurE subfamily. The cofactor is Mg(2+). In terms of processing, carboxylation is probably crucial for Mg(2+) binding and, consequently, for the gamma-phosphate positioning of ATP.

It localises to the cytoplasm. It carries out the reaction UDP-N-acetyl-alpha-D-muramoyl-L-alanyl-D-glutamate + meso-2,6-diaminopimelate + ATP = UDP-N-acetyl-alpha-D-muramoyl-L-alanyl-gamma-D-glutamyl-meso-2,6-diaminopimelate + ADP + phosphate + H(+). It participates in cell wall biogenesis; peptidoglycan biosynthesis. In terms of biological role, catalyzes the addition of meso-diaminopimelic acid to the nucleotide precursor UDP-N-acetylmuramoyl-L-alanyl-D-glutamate (UMAG) in the biosynthesis of bacterial cell-wall peptidoglycan. The protein is UDP-N-acetylmuramoyl-L-alanyl-D-glutamate--2,6-diaminopimelate ligase of Neisseria meningitidis serogroup A / serotype 4A (strain DSM 15465 / Z2491).